The chain runs to 195 residues: MNLSTIGFQVIFKQRLRCVRFGVRCISRETLGCNSVAASSADEDDKIYVPKKPILSPIDQSKVEEPPVFDKALITHLERLSLVWFTDEQAVFNLKEAVRFANQLKLVDTTGIEPLETLLEDMPCPLREDVADNPMTKAEVLMNAAKVVEDYFVAPLENIPLEESDKLNLTKVEEFDRRVMAKKNLLNDSVKEKTE.

A mitochondrion-targeting transit peptide spans 1 to 18 (MNLSTIGFQVIFKQRLRC).

Belongs to the GatC family. Subunit of the heterotrimeric GatCAB amidotransferase (AdT) complex, composed of A, B and C subunits.

It localises to the mitochondrion. The enzyme catalyses L-glutamyl-tRNA(Gln) + L-glutamine + ATP + H2O = L-glutaminyl-tRNA(Gln) + L-glutamate + ADP + phosphate + H(+). Its function is as follows. Allows the formation of correctly charged Gln-tRNA(Gln) through the transamidation of misacylated Glu-tRNA(Gln) in the mitochondria. The reaction takes place in the presence of glutamine and ATP through an activated gamma-phospho-Glu-tRNA(Gln). This chain is Glutamyl-tRNA(Gln) amidotransferase subunit C, mitochondrial, found in Brugia malayi (Filarial nematode worm).